The primary structure comprises 381 residues: tRNA N6-adenosine threonylcarbamoyltransferase (381 aa).

2 residues coordinate Fe cation: His-114 and His-118. Substrate-binding positions include 142-146 (VVSGG), Asp-178, Gly-191, Asp-195, and Asn-321. Position 349 (Asp-349) interacts with Fe cation.

The protein belongs to the KAE1 / TsaD family. Requires Fe(2+) as cofactor.

The protein resides in the cytoplasm. It catalyses the reaction L-threonylcarbamoyladenylate + adenosine(37) in tRNA = N(6)-L-threonylcarbamoyladenosine(37) in tRNA + AMP + H(+). In terms of biological role, required for the formation of a threonylcarbamoyl group on adenosine at position 37 (t(6)A37) in tRNAs that read codons beginning with adenine. Is involved in the transfer of the threonylcarbamoyl moiety of threonylcarbamoyl-AMP (TC-AMP) to the N6 group of A37, together with TsaE and TsaB. TsaD likely plays a direct catalytic role in this reaction. The sequence is that of tRNA N6-adenosine threonylcarbamoyltransferase from Koribacter versatilis (strain Ellin345).